Here is a 117-residue protein sequence, read N- to C-terminus: S-adenosylmethionine decarboxylase proenzyme (117 aa).

S63 serves as the catalytic Schiff-base intermediate with substrate; via pyruvic acid. Pyruvic acid (Ser); by autocatalysis is present on S63. The active-site Proton acceptor; for processing activity is H68. C83 functions as the Proton donor; for catalytic activity in the catalytic mechanism.

It belongs to the prokaryotic AdoMetDC family. Type 1 subfamily. As to quaternary structure, heterotetramer of two alpha and two beta chains arranged as a dimer of alpha/beta heterodimers. Requires pyruvate as cofactor. In terms of processing, is synthesized initially as an inactive proenzyme. Formation of the active enzyme involves a self-maturation process in which the active site pyruvoyl group is generated from an internal serine residue via an autocatalytic post-translational modification. Two non-identical subunits are generated from the proenzyme in this reaction, and the pyruvate is formed at the N-terminus of the alpha chain, which is derived from the carboxyl end of the proenzyme. The post-translation cleavage follows an unusual pathway, termed non-hydrolytic serinolysis, in which the side chain hydroxyl group of the serine supplies its oxygen atom to form the C-terminus of the beta chain, while the remainder of the serine residue undergoes an oxidative deamination to produce ammonia and the pyruvoyl group blocking the N-terminus of the alpha chain.

The catalysed reaction is S-adenosyl-L-methionine + H(+) = S-adenosyl 3-(methylsulfanyl)propylamine + CO2. It participates in amine and polyamine biosynthesis; S-adenosylmethioninamine biosynthesis; S-adenosylmethioninamine from S-adenosyl-L-methionine: step 1/1. Its function is as follows. Catalyzes the decarboxylation of S-adenosylmethionine to S-adenosylmethioninamine (dcAdoMet), the propylamine donor required for the synthesis of the polyamines spermine and spermidine from the diamine putrescine. In Methanococcus aeolicus (strain ATCC BAA-1280 / DSM 17508 / OCM 812 / Nankai-3), this protein is S-adenosylmethionine decarboxylase proenzyme.